The chain runs to 74 residues: Serine protease inhibitor Kazal-type 7 (74 aa).

The N-terminal stretch at 1–17 is a signal peptide; it reads MKLLGGLLLLFTATCLC. The Kazal-like domain occupies 18-74; sequence NVDCDIYKKYPVVAIPCPIENIPVCGSDYITYGNKCKLCTEILRSNGKIQFLHEGHC. 3 cysteine pairs are disulfide-bonded: C21–C56, C34–C53, and C42–C74.

Its subcellular location is the secreted. Probable serine protease inhibitor. In Rattus norvegicus (Rat), this protein is Serine protease inhibitor Kazal-type 7 (Spink7).